Reading from the N-terminus, the 249-residue chain is Aspartate/glutamate leucyltransferase (249 aa).

It belongs to the R-transferase family. Bpt subfamily.

The protein resides in the cytoplasm. The enzyme catalyses N-terminal L-glutamyl-[protein] + L-leucyl-tRNA(Leu) = N-terminal L-leucyl-L-glutamyl-[protein] + tRNA(Leu) + H(+). The catalysed reaction is N-terminal L-aspartyl-[protein] + L-leucyl-tRNA(Leu) = N-terminal L-leucyl-L-aspartyl-[protein] + tRNA(Leu) + H(+). In terms of biological role, functions in the N-end rule pathway of protein degradation where it conjugates Leu from its aminoacyl-tRNA to the N-termini of proteins containing an N-terminal aspartate or glutamate. The polypeptide is Aspartate/glutamate leucyltransferase (Brucella abortus (strain 2308)).